The following is a 64-amino-acid chain: Large ribosomal subunit protein bL35 (64 aa).

Residues 1 to 26 (MPKMKSHRGASKRFKRTASGKLKRGR) are compositionally biased toward basic residues. Disordered regions lie at residues 1-28 (MPKM…GRAY) and 33-52 (FGNK…MVSS).

This sequence belongs to the bacterial ribosomal protein bL35 family.

In Exiguobacterium sibiricum (strain DSM 17290 / CCUG 55495 / CIP 109462 / JCM 13490 / 255-15), this protein is Large ribosomal subunit protein bL35.